The primary structure comprises 150 residues: D-aminoacyl-tRNA deacylase (150 aa).

The Gly-cisPro motif, important for rejection of L-amino acids motif lies at 133–134 (GP).

The protein belongs to the DTD family. In terms of assembly, homodimer.

Its subcellular location is the cytoplasm. It carries out the reaction glycyl-tRNA(Ala) + H2O = tRNA(Ala) + glycine + H(+). The enzyme catalyses a D-aminoacyl-tRNA + H2O = a tRNA + a D-alpha-amino acid + H(+). In terms of biological role, an aminoacyl-tRNA editing enzyme that deacylates mischarged D-aminoacyl-tRNAs. Also deacylates mischarged glycyl-tRNA(Ala), protecting cells against glycine mischarging by AlaRS. Acts via tRNA-based rather than protein-based catalysis; rejects L-amino acids rather than detecting D-amino acids in the active site. By recycling D-aminoacyl-tRNA to D-amino acids and free tRNA molecules, this enzyme counteracts the toxicity associated with the formation of D-aminoacyl-tRNA entities in vivo and helps enforce protein L-homochirality. In Micrococcus luteus (strain ATCC 4698 / DSM 20030 / JCM 1464 / CCM 169 / CCUG 5858 / IAM 1056 / NBRC 3333 / NCIMB 9278 / NCTC 2665 / VKM Ac-2230) (Micrococcus lysodeikticus), this protein is D-aminoacyl-tRNA deacylase.